Here is a 193-residue protein sequence, read N- to C-terminus: Molybdopterin synthase catalytic subunit (193 aa).

Substrate-binding positions include 118-119, K134, and 141-143; these read HR and KKE. The interval 159–193 is disordered; it reads DRTTTDGTTASSPAPATRPAKGGGCCGRKVRVNES. Residues 163–178 are compositionally biased toward low complexity; the sequence is TDGTTASSPAPATRPA.

This sequence belongs to the MoaE family. MOCS2B subfamily. As to quaternary structure, heterotetramer; composed of 2 small (MOCS2A) and 2 large (MOCS2B) subunits.

The protein localises to the cytoplasm. It carries out the reaction 2 [molybdopterin-synthase sulfur-carrier protein]-C-terminal-Gly-aminoethanethioate + cyclic pyranopterin phosphate + H2O = molybdopterin + 2 [molybdopterin-synthase sulfur-carrier protein]-C-terminal Gly-Gly + 2 H(+). Its pathway is cofactor biosynthesis; molybdopterin biosynthesis. Catalytic subunit of the molybdopterin synthase complex, a complex that catalyzes the conversion of precursor Z into molybdopterin. Acts by mediating the incorporation of 2 sulfur atoms from thiocarboxylated MOCS2A into precursor Z to generate a dithiolene group. This Oryza sativa subsp. japonica (Rice) protein is Molybdopterin synthase catalytic subunit.